Here is a 1060-residue protein sequence, read N- to C-terminus: RNA-binding protein 27 (1060 aa).

Composition is skewed to basic and acidic residues over residues 91-102 (LVQEKEEIKEEV) and 124-143 (TRSE…DGKW). Disordered regions lie at residues 91–143 (LVQE…DGKW) and 162–235 (WRRG…GAQS). Basic residues predominate over residues 165 to 185 (GRSKSRSKSRGLSRSRSRSRG). The span at 186–211 (RSKDRDPNRNVEHRERSKFKSERNDL) shows a compositional bias: basic and acidic residues. Polar residues predominate over residues 225–235 (SSEQYSSGAQS). The C3H1-type zinc-finger motif lies at 273–301 (LPPKRRCRDYDERGFCVLGDLCQFDHGND). Composition is skewed to pro residues over residues 319 to 356 (PPPG…PGPG) and 371 to 384 (QPPP…PRPP). The segment at 319-412 (PPPGLPPPPP…PNLASVGTRL (94 aa)) is disordered. Polar residues predominate over residues 386–402 (TQSSLINSRDQPGTSAV). Thr447 is subject to Phosphothreonine. Position 455 is an omega-N-methylarginine (Arg455). Residues 565 to 592 (MSGLEGPLTKKPWLGKQGNNNQNKPGFL) form a disordered region. Over residues 579–588 (GKQGNNNQNK) the composition is skewed to low complexity. Residues 600 to 674 (TKLEVKKIPQ…RFIRVLWHRE (75 aa)) enclose the RRM domain. Residues 809–886 (VQEVLKKKQE…KDELKTSSAV (78 aa)) are a coiled coil. The residue at position 927 (Ser927) is a Phosphoserine. Disordered stretches follow at residues 940 to 968 (PVGR…SLNH) and 1006 to 1060 (DRRL…SWRR). Phosphoserine occurs at positions 1012 and 1020. The segment covering 1024 to 1053 (ETEEEEVKEEETETSDLFLPDDDDEDEDEY) has biased composition (acidic residues).

It is found in the cytoplasm. The protein resides in the nucleus speckle. May be involved in the turnover of nuclear polyadenylated (pA+) RNA. The chain is RNA-binding protein 27 from Homo sapiens (Human).